The sequence spans 912 residues: WD repeat-containing protein 44 (912 aa).

3 disordered regions span residues 206 to 352 (DIIE…ELTD), 399 to 426 (SNDAAQSDDEEKPQSHQSETDGGKLKQK), and 460 to 481 (RDEVFHTDQDDPSSSDDEGMPY). Residues 236-258 (NRPPQPINAPPPRPPPPARPAPP) show a composition bias toward pro residues. Residues 264-278 (GDTDFDRSSGFEYQK) show a composition bias toward basic and acidic residues. Polar residues predominate over residues 288–311 (SPNTLTENMNRDSQPSLDLASATS). Positions 410–422 (KPQSHQSETDGGK) are enriched in basic and acidic residues. The segment covering 469–478 (DDPSSSDDEG) has biased composition (acidic residues). The stretch at 511 to 550 (EHVGAVWTMKFSHCGRLLASAGQDNVVRIWVLKNAFDYFN) is one WD 1 repeat. The interval 559-594 (EGRVSPSPSQESLNSSKSDTDGGVFSGTDDVDPDDK) is disordered. Residues 563 to 575 (SPSPSQESLNSSK) are compositionally biased toward low complexity. WD repeat units lie at residues 608-646 (GHTADLLDLSWSKNYFLLSSSMDKTVRLWHISRRECLCC), 648-688 (QHID…VALW), 693-732 (GQTKLITAANFCQNGKHAVIGTYDGRCIFYDTEHLKYHTQ), 743-782 (RVGRKITGIEPLPGENKILVTSNDSRIRLYDLRDLSLSMK), 787-826 (VNSSSQIKASFSHDFTYIVSGSEDKYVYIWSTYHDLSKFT), 841-880 (AHNAVVTSAIFAPNPGLMVSAETSSEKQEGDQAEPVENIP), and 882-912 (GALKSDHTEVLLSADFTGAIKVFINKKKNIS). Positions 861 to 882 (AETSSEKQEGDQAEPVENIPSG) are disordered.

The protein localises to the cytoplasm. Its subcellular location is the cytosol. It localises to the perinuclear region. The protein resides in the endosome membrane. It is found in the golgi apparatus. The protein localises to the trans-Golgi network. Downstream effector for rab11. May be involved in vesicle recycling. May also be involved in the inhibition of the intracellular ciliogenesis pathway. This chain is WD repeat-containing protein 44 (wdr44), found in Xenopus laevis (African clawed frog).